A 288-amino-acid chain; its full sequence is Putative alkaline ceramidase dcd3A (288 aa).

A glycan (N-linked (GlcNAc...) asparagine) is linked at Asn-23. Helical transmembrane passes span 41–61, 78–98, 105–125, 146–166, 172–192, 206–226, and 240–260; these read IISL…GTGV, VILS…YHAT, LFDE…MVTV, HLLP…ILVI, ILQV…IYLI, SYLY…WVVE, and LHAF…QFLI.

This sequence belongs to the alkaline ceramidase family.

Its subcellular location is the membrane. This is Putative alkaline ceramidase dcd3A (dcd3A) from Dictyostelium discoideum (Social amoeba).